The following is a 1756-amino-acid chain: Transposon Ty1-BR Gag-Pol polyprotein (1756 aa).

Polar residues-rich tracts occupy residues 1-10, 48-60, and 127-152; these read MESQQLSNYP, TKAN…TPAS, and QSQF…GNTF. Disordered regions lie at residues 1 to 93, 126 to 173, and 352 to 421; these read MESQ…MMTQ, PQSQ…RPPP, and GSRN…SKST. Positions 153-165 are enriched in low complexity; that stretch reads TDSSSADSDMTST. The segment at 299-401 is RNA-binding; it reads NNGIHINNKV…NSKSKTARAH (103 aa). Positions 402–418 are enriched in low complexity; sequence NVSTSNNSPSTDNDSIS. Serine 416 carries the post-translational modification Phosphoserine. Catalysis depends on aspartate 461, which acts as the For protease activity; shared with dimeric partner. The segment at 583-640 is integrase-type zinc finger-like; sequence NVHTSESTRKYPYPFIHRMLAHANAQTIRYSLKNNTITYFNESDVDWSSAIDYQCPDC. Positions 660-835 constitute an Integrase catalytic domain; the sequence is NSYEPFQYLH…AGLDISTLLP (176 aa). Mg(2+) contacts are provided by aspartate 671 and aspartate 736. Disordered regions lie at residues 956–1088 and 1142–1173; these read SKAV…TEKR and PTEL…SNAY. Residues 960 to 969 are compositionally biased toward low complexity; that stretch reads SPTDSTPPST. Polar residues-rich tracts occupy residues 1005-1017 and 1031-1043; these read STPQ…STDS and MSQS…SYAS. Residues 1044–1053 show a composition bias toward basic and acidic residues; that stretch reads KSKDFRHSDS. Over residues 1054-1082 the composition is skewed to polar residues; the sequence is YSDNETNHTNVPISSTGGTNNKTVPQTSE. Positions 1179 to 1213 match the Bipartite nuclear localization signal motif; the sequence is KKRSLEDNETEIKVSRDTWNTKNMRSLEPPRSKKR. The region spanning 1339–1477 is the Reverse transcriptase Ty1/copia-type domain; it reads NNYYITQLDI…DILGLEIKYQ (139 aa). 6 residues coordinate Mg(2+): aspartate 1347, aspartate 1428, aspartate 1429, aspartate 1611, glutamate 1653, and aspartate 1686. Positions 1611 to 1753 constitute an RNase H Ty1/copia-type domain; that stretch reads DASYGNQPYY…IKTFKLLTNK (143 aa).

In terms of assembly, the capsid protein forms a homotrimer, from which the VLPs are assembled. The protease is a homodimer, whose active site consists of two apposed aspartic acid residues. Post-translationally, initially, virus-like particles (VLPs) are composed of the structural unprocessed proteins Gag and Gag-Pol, and also contain the host initiator methionine tRNA (tRNA(i)-Met) which serves as a primer for minus-strand DNA synthesis, and a dimer of genomic Ty RNA. Processing of the polyproteins occurs within the particle and proceeds by an ordered pathway, called maturation. First, the protease (PR) is released by autocatalytic cleavage of the Gag-Pol polyprotein yielding capsid protein p45 and a Pol-p154 precursor protein. This cleavage is a prerequisite for subsequent processing of Pol-p154 at the remaining sites to release the mature structural and catalytic proteins. Maturation takes place prior to the RT reaction and is required to produce transposition-competent VLPs.

It localises to the cytoplasm. The protein localises to the nucleus. It carries out the reaction DNA(n) + a 2'-deoxyribonucleoside 5'-triphosphate = DNA(n+1) + diphosphate. It catalyses the reaction Endonucleolytic cleavage to 5'-phosphomonoester.. Capsid protein (CA) is the structural component of the virus-like particle (VLP), forming the shell that encapsulates the retrotransposons dimeric RNA genome. The particles are assembled from trimer-clustered units and there are holes in the capsid shells that allow for the diffusion of macromolecules. CA also has nucleocapsid-like chaperone activity, promoting primer tRNA(i)-Met annealing to the multipartite primer-binding site (PBS), dimerization of Ty1 RNA and initiation of reverse transcription. Functionally, the aspartyl protease (PR) mediates the proteolytic cleavages of the Gag and Gag-Pol polyproteins after assembly of the VLP. In terms of biological role, reverse transcriptase/ribonuclease H (RT) is a multifunctional enzyme that catalyzes the conversion of the retro-elements RNA genome into dsDNA within the VLP. The enzyme displays a DNA polymerase activity that can copy either DNA or RNA templates, and a ribonuclease H (RNase H) activity that cleaves the RNA strand of RNA-DNA heteroduplexes during plus-strand synthesis and hydrolyzes RNA primers. The conversion leads to a linear dsDNA copy of the retrotransposon that includes long terminal repeats (LTRs) at both ends. Its function is as follows. Integrase (IN) targets the VLP to the nucleus, where a subparticle preintegration complex (PIC) containing at least integrase and the newly synthesized dsDNA copy of the retrotransposon must transit the nuclear membrane. Once in the nucleus, integrase performs the integration of the dsDNA into the host genome. This Saccharomyces cerevisiae (strain ATCC 204508 / S288c) (Baker's yeast) protein is Transposon Ty1-BR Gag-Pol polyprotein (TY1B-BR).